We begin with the raw amino-acid sequence, 743 residues long: MTTLESLDMPEMTEVEDDTVDIHIDNSKVALLFSKSKVFVHPTSKMKDNISGYLSLSKSKALGNSSVAGSDILLSWVPDSFLKNRPRDLSVFQNAETLSNGSIREWVEIPQHLDYSFSVRLCSIYSIIFRPPRYGWNYGSIVINLRDSGESLPPLFFHDDECISTIEYGKQITRDRFDPFDESGNMFWGGTHLLMQLKKYASLEQSSHESQLYLVNPSPEDTVAFQSVELQKVISNNRLNSSSTPPTPRSSSSIFNPFRRALHDLSFTVLERFSRVTNYGKSEVDRLMEHKVTKSILPHLPRELQVLLESKRVQKLTEEYDPARMFLARWAEGIVEQSESNNSQPVNNAGVWTDAQREEDSSLGPFELVYIEERVKRDDPLSVEQWNSMFNAHGKLQVDVHRVLGIIFHGGIQPSLRKEVWPFLLSVYPWDSTSEERRVIYLSLQEEYCTLKRKWYEDIHKQFNDRWFIEQRNRIEKDVHRTDRQHEYFQIEDLPHPDPQSTFTGTNMNMEMMKDILLTYNEYDTELGYVQGMSDLLAPIYVTFNDNALTFWGMVGLMKRLHFNFLRDQSGMHRQLDTLRLLIEFMDPELFAHLEKTDSSNLFCFFRMLLIYFKREFDWEVLLKLWDVLFTNYLSYDYHIFVAYAIAERHREVLLNQTSAFDEVLKYFNELSGKLALEPTLICAEQCFYQFKNKLALIDRKQMEETNSDEDGSKETDLPTIAPYLRNLLKTSQPQYTPSGKQE.

Residues 411–633 form the Rab-GAP TBC domain; that stretch reads GIQPSLRKEV…KLWDVLFTNY (223 aa).

It is found in the cytoplasm. Its subcellular location is the nucleus. In terms of biological role, most effectively accelerates the intrinsic GTPase activity of ypt7. This Schizosaccharomyces pombe (strain 972 / ATCC 24843) (Fission yeast) protein is GTPase-activating protein gyp7.